The sequence spans 159 residues: Transcription antitermination protein NusB (159 aa).

The protein belongs to the NusB family.

Its function is as follows. Involved in transcription antitermination. Required for transcription of ribosomal RNA (rRNA) genes. Binds specifically to the boxA antiterminator sequence of the ribosomal RNA (rrn) operons. This is Transcription antitermination protein NusB from Xanthomonas campestris pv. campestris (strain 8004).